A 169-amino-acid chain; its full sequence is NADH-quinone oxidoreductase subunit I (169 aa).

2 consecutive 4Fe-4S ferredoxin-type domains span residues 61–90 (RKYK…IEAQ) and 100–129 (VRYD…EGPN). [4Fe-4S] cluster is bound by residues Cys-70, Cys-73, Cys-76, Cys-80, Cys-109, Cys-112, Cys-115, and Cys-119.

Belongs to the complex I 23 kDa subunit family. As to quaternary structure, NDH-1 is composed of 14 different subunits. Subunits NuoA, H, J, K, L, M, N constitute the membrane sector of the complex. [4Fe-4S] cluster is required as a cofactor.

It is found in the cell inner membrane. The enzyme catalyses a quinone + NADH + 5 H(+)(in) = a quinol + NAD(+) + 4 H(+)(out). NDH-1 shuttles electrons from NADH, via FMN and iron-sulfur (Fe-S) centers, to quinones in the respiratory chain. The immediate electron acceptor for the enzyme in this species is believed to be ubiquinone. Couples the redox reaction to proton translocation (for every two electrons transferred, four hydrogen ions are translocated across the cytoplasmic membrane), and thus conserves the redox energy in a proton gradient. The sequence is that of NADH-quinone oxidoreductase subunit I from Ehrlichia chaffeensis (strain ATCC CRL-10679 / Arkansas).